We begin with the raw amino-acid sequence, 216 residues long: Phosphoenolpyruvate guanylyltransferase (216 aa).

Threonine 143, glycine 159, and serine 162 together coordinate phosphoenolpyruvate.

This sequence belongs to the CofC family.

It carries out the reaction phosphoenolpyruvate + GTP + H(+) = enolpyruvoyl-2-diphospho-5'-guanosine + diphosphate. It participates in cofactor biosynthesis; coenzyme F420 biosynthesis. Guanylyltransferase that catalyzes the activation of phosphoenolpyruvate (PEP) as enolpyruvoyl-2-diphospho-5'-guanosine, via the condensation of PEP with GTP. It is involved in the biosynthesis of coenzyme F420, a hydride carrier cofactor. The protein is Phosphoenolpyruvate guanylyltransferase of Streptomyces scabiei (strain 87.22).